The sequence spans 456 residues: Protein trichome birefringence-like 25 (456 aa).

Residues Gln-26–Tyr-42 traverse the membrane as a helical; Signal-anchor for type II membrane protein segment. The short motif at Gly-172–Ser-174 is the GDS motif element. The DCXHWCLPGXXDXWN motif motif lies at Asp-426–Asn-440.

It belongs to the PC-esterase family. TBL subfamily.

The protein resides in the membrane. Functionally, may be involved in the O-acetylation of mannan. May act as a bridging protein that binds pectin and other cell wall polysaccharides. Probably involved in maintaining esterification of pectins. The chain is Protein trichome birefringence-like 25 (TBL25) from Arabidopsis thaliana (Mouse-ear cress).